Reading from the N-terminus, the 321-residue chain is PI-PLC X domain-containing protein 3 (321 aa).

In terms of domain architecture, PI-PLC X-box spans S22–S197. Active-site residues include H37 and H114.

In terms of tissue distribution, expressed at highest levels in heart. Also detected in kidney, lung, small intestine and colon. Expressed at very low levels, if any, in leukocytes, thymus and skeletal muscle.

Its subcellular location is the cytoplasm. The sequence is that of PI-PLC X domain-containing protein 3 (PLCXD3) from Homo sapiens (Human).